Consider the following 490-residue polypeptide: Metal cation symporter ZIP14 (490 aa).

The N-terminal stretch at 1-28 (MELLRPALPSYFLLTLLSIWTAASEARA) is a signal peptide. The Extracellular segment spans residues 29–155 (VSTGMPTISA…PSSVEVWGYG (127 aa)). N-linked (GlcNAc...) asparagine glycosylation is found at Asn75, Asn85, and Asn100. The interval 127-146 (ACSSENQENEENEQTEEGRP) is disordered. Residues 156-176 (LLCVTVISLCSLLGASVVPFM) traverse the membrane as a helical segment. Residues 177-184 (KKTFYKRL) are Cytoplasmic-facing. A helical membrane pass occupies residues 185–205 (LLYFIALAIGTLYSNALFQLI). The Extracellular portion of the chain corresponds to 206-222 (PEAFGFNPMEDYYVSKS). Residues 223–243 (AVVFGGFYLFFFTEKILKMLL) form a helical membrane-spanning segment. The Cytoplasmic segment spans residues 244-395 (KQKNEHHHGH…LLNAGMSLQQ (152 aa)). Positions 249–256 (HHHGHSHY) match the HHHGHXHX-motif motif. The short motif at 374 to 379 (EEFPHE) is the XEXPHE-motif element. The chain crosses the membrane as a helical span at residues 396-416 (ALFFNFLSACCCYVGLGFGIL). Residues 417 to 422 (AGSHFS) are Extracellular-facing. A helical transmembrane segment spans residues 423-443 (ANWIFALAGGMFLYISLADMF). Residues 444 to 459 (PEMNEVSQEDERKGSA) are Cytoplasmic-facing. A helical membrane pass occupies residues 460–480 (LIPFVIQNLGLLTGFGIMLVL). At 481 to 490 (TMYSGHIQIG) the chain is on the extracellular side.

Belongs to the ZIP transporter (TC 2.A.5) family. As to quaternary structure, homotrimer. Ubiquitinated. Ubiquitination occurs upon iron depletion. The ubiquitinated form undergoes proteasomal degradation. Post-translationally, N-glycosylated. N-glycosylation at Asn-100 is required for iron-regulated extraction of the transporter from membranes and subsequent proteasomal degradation.

It localises to the cell membrane. Its subcellular location is the apical cell membrane. The protein resides in the basolateral cell membrane. It is found in the early endosome membrane. The protein localises to the late endosome membrane. It localises to the lysosome membrane. The catalysed reaction is Zn(2+)(out) + 2 hydrogencarbonate(out) = Zn(2+)(in) + 2 hydrogencarbonate(in). It carries out the reaction Mn(2+)(out) + 2 hydrogencarbonate(out) = Mn(2+)(in) + 2 hydrogencarbonate(in). The enzyme catalyses Fe(2+)(out) + 2 hydrogencarbonate(out) = Fe(2+)(in) + 2 hydrogencarbonate(in). It catalyses the reaction Cd(2+)(out) + 2 hydrogencarbonate(out) = Cd(2+)(in) + 2 hydrogencarbonate(in). In terms of biological role, electroneutral transporter of the plasma membrane mediating the cellular uptake of the divalent metal cations zinc, manganese and iron that are important for tissue homeostasis, metabolism, development and immunity. Functions as an energy-dependent symporter, transporting through the membranes an electroneutral complex composed of a divalent metal cation and two bicarbonate anions. Beside these endogenous cellular substrates, can also import cadmium a non-essential metal which is cytotoxic and carcinogenic. The protein is Metal cation symporter ZIP14 of Bos taurus (Bovine).